A 332-amino-acid chain; its full sequence is Fructose-1,6-bisphosphatase class 1 (332 aa).

4 residues coordinate Mg(2+): E89, D110, L112, and D113. Residues 113–116 (DGSS), N206, Y239, 257–259 (YLY), and K269 contribute to the substrate site. E275 is a binding site for Mg(2+).

It belongs to the FBPase class 1 family. In terms of assembly, homotetramer. It depends on Mg(2+) as a cofactor.

The protein resides in the cytoplasm. The catalysed reaction is beta-D-fructose 1,6-bisphosphate + H2O = beta-D-fructose 6-phosphate + phosphate. It participates in carbohydrate biosynthesis; gluconeogenesis. This Salmonella typhi protein is Fructose-1,6-bisphosphatase class 1.